Consider the following 176-residue polypeptide: Inorganic pyrophosphatase (176 aa).

Residues lysine 30, arginine 44, and tyrosine 56 each coordinate substrate. Mg(2+) contacts are provided by aspartate 66, aspartate 71, and aspartate 103. Tyrosine 140 is a binding site for substrate.

Belongs to the PPase family. In terms of assembly, homohexamer. The cofactor is Mg(2+).

Its subcellular location is the cytoplasm. It carries out the reaction diphosphate + H2O = 2 phosphate + H(+). Its function is as follows. Catalyzes the hydrolysis of inorganic pyrophosphate (PPi) forming two phosphate ions. The sequence is that of Inorganic pyrophosphatase from Methanothermobacter thermautotrophicus (strain ATCC 29096 / DSM 1053 / JCM 10044 / NBRC 100330 / Delta H) (Methanobacterium thermoautotrophicum).